We begin with the raw amino-acid sequence, 343 residues long: Flagellar motor switch protein FliG (343 aa).

The short motif at 137-140 (EHPQ) is the Part of the EHPQR-motif element. The short motif at 245–248 (MFTF) is the M-F-X-F motif; its intrinsic flexibility is probably coupled to flagellar rotation element.

It belongs to the FliG family.

It localises to the cell inner membrane. It is found in the bacterial flagellum basal body. In terms of biological role, one of the proteins that forms a switch complex that is proposed to be located at the base of the basal body. This complex interacts with chemotaxis proteins (such as CheY) in addition to contacting components of the motor that determine the direction of flagellar rotation. Required for flagellum synthesis and motility. In H.pylori four flagellar switch proteins are encoded, FliG, FliM, FliN and FliY. This is Flagellar motor switch protein FliG from Helicobacter pylori (strain ATCC 700392 / 26695) (Campylobacter pylori).